Here is a 792-residue protein sequence, read N- to C-terminus: Phenylalanine--tRNA ligase beta subunit (792 aa).

The 109-residue stretch at 39-147 (GEALDLILVA…EDAPIGTPLA (109 aa)) folds into the tRNA-binding domain. The B5 domain maps to 400–475 (PAPASILLRR…RIRGYEHLPT (76 aa)). The Mg(2+) site is built by Asp-453, Asp-459, Glu-462, and Glu-463. The FDX-ACB domain occupies 698 to 791 (SRFPFVRRDL…IQQRHDVRIR (94 aa)).

This sequence belongs to the phenylalanyl-tRNA synthetase beta subunit family. Type 1 subfamily. As to quaternary structure, tetramer of two alpha and two beta subunits. Requires Mg(2+) as cofactor.

It is found in the cytoplasm. It carries out the reaction tRNA(Phe) + L-phenylalanine + ATP = L-phenylalanyl-tRNA(Phe) + AMP + diphosphate + H(+). The protein is Phenylalanine--tRNA ligase beta subunit of Xylella fastidiosa (strain Temecula1 / ATCC 700964).